A 497-amino-acid chain; its full sequence is Guanosine-5'-triphosphate,3'-diphosphate pyrophosphatase (497 aa).

This sequence belongs to the GppA/Ppx family. GppA subfamily.

It carries out the reaction guanosine 3'-diphosphate 5'-triphosphate + H2O = guanosine 3',5'-bis(diphosphate) + phosphate + H(+). Its pathway is purine metabolism; ppGpp biosynthesis; ppGpp from GTP: step 2/2. In terms of biological role, catalyzes the conversion of pppGpp to ppGpp. Guanosine pentaphosphate (pppGpp) is a cytoplasmic signaling molecule which together with ppGpp controls the 'stringent response', an adaptive process that allows bacteria to respond to amino acid starvation, resulting in the coordinated regulation of numerous cellular activities. This Vibrio campbellii (strain ATCC BAA-1116) protein is Guanosine-5'-triphosphate,3'-diphosphate pyrophosphatase.